A 182-amino-acid polypeptide reads, in one-letter code: Adenine phosphoribosyltransferase (182 aa).

It belongs to the purine/pyrimidine phosphoribosyltransferase family. As to quaternary structure, homodimer.

It is found in the cytoplasm. The catalysed reaction is AMP + diphosphate = 5-phospho-alpha-D-ribose 1-diphosphate + adenine. It participates in purine metabolism; AMP biosynthesis via salvage pathway; AMP from adenine: step 1/1. Catalyzes a salvage reaction resulting in the formation of AMP, that is energically less costly than de novo synthesis. The protein is Adenine phosphoribosyltransferase of Ectopseudomonas mendocina (strain ymp) (Pseudomonas mendocina).